We begin with the raw amino-acid sequence, 263 residues long: 4-hydroxy-tetrahydrodipicolinate reductase (263 aa).

NAD(+) contacts are provided by residues 7-12 (GASGRM) and aspartate 33. Arginine 34 serves as a coordination point for NADP(+). NAD(+)-binding positions include 96-98 (GTT) and 120-123 (APNM). Histidine 153 acts as the Proton donor/acceptor in catalysis. Histidine 154 is a binding site for (S)-2,3,4,5-tetrahydrodipicolinate. The active-site Proton donor is lysine 157. Residue 163-164 (GT) participates in (S)-2,3,4,5-tetrahydrodipicolinate binding.

This sequence belongs to the DapB family.

Its subcellular location is the cytoplasm. The catalysed reaction is (S)-2,3,4,5-tetrahydrodipicolinate + NAD(+) + H2O = (2S,4S)-4-hydroxy-2,3,4,5-tetrahydrodipicolinate + NADH + H(+). It carries out the reaction (S)-2,3,4,5-tetrahydrodipicolinate + NADP(+) + H2O = (2S,4S)-4-hydroxy-2,3,4,5-tetrahydrodipicolinate + NADPH + H(+). It functions in the pathway amino-acid biosynthesis; L-lysine biosynthesis via DAP pathway; (S)-tetrahydrodipicolinate from L-aspartate: step 4/4. Functionally, catalyzes the conversion of 4-hydroxy-tetrahydrodipicolinate (HTPA) to tetrahydrodipicolinate. This is 4-hydroxy-tetrahydrodipicolinate reductase from Ralstonia pickettii (strain 12J).